A 143-amino-acid polypeptide reads, in one-letter code: Interleukin-3 (143 aa).

Positions 1-19 (MSRLPVLLLLHLLVSPGLQ) are cleaved as a signal peptide. A disulfide bond links Cys35 and Cys103. Asn89 is a glycosylation site (N-linked (GlcNAc...) asparagine).

This sequence belongs to the IL-3 family. As to quaternary structure, monomer. In terms of tissue distribution, activated T-cells, mast cells, natural killer cells.

It is found in the secreted. Granulocyte/macrophage colony-stimulating factors are cytokines that act in hematopoiesis by controlling the production, differentiation, and function of 2 related white cell populations of the blood, the granulocytes and the monocytes-macrophages. In terms of biological role, this CSF induces granulocytes, macrophages, mast cells, stem cells, erythroid cells, eosinophils and megakaryocytes. The polypeptide is Interleukin-3 (IL3) (Macaca mulatta (Rhesus macaque)).